Reading from the N-terminus, the 100-residue chain is MFAVIASGSKQYRVKLNDEIYVEKLNSQVGEKIVFDKVYFVNNTFGKPFVKGASVTCEVLKQGRQKKINVIKHISQKHHLKKYGHRQPYTKLKVVAINHG.

It belongs to the bacterial ribosomal protein bL21 family. Part of the 50S ribosomal subunit. Contacts protein L20.

This protein binds to 23S rRNA in the presence of protein L20. This is Large ribosomal subunit protein bL21 from Mycoplasmoides gallisepticum (strain R(low / passage 15 / clone 2)) (Mycoplasma gallisepticum).